The chain runs to 564 residues: Threonine--tRNA ligase (564 aa).

The catalytic stretch occupies residues 167 to 464 (DHRAIGKRLE…LLEKTHGNLP (298 aa)). Zn(2+)-binding residues include Cys260, His311, and His441.

This sequence belongs to the class-II aminoacyl-tRNA synthetase family. In terms of assembly, homodimer. It depends on Zn(2+) as a cofactor.

The protein resides in the cytoplasm. It carries out the reaction tRNA(Thr) + L-threonine + ATP = L-threonyl-tRNA(Thr) + AMP + diphosphate + H(+). Its function is as follows. Catalyzes the attachment of threonine to tRNA(Thr) in a two-step reaction: L-threonine is first activated by ATP to form Thr-AMP and then transferred to the acceptor end of tRNA(Thr). Also edits incorrectly charged L-seryl-tRNA(Thr). The sequence is that of Threonine--tRNA ligase from Mycoplasma pneumoniae (strain ATCC 29342 / M129 / Subtype 1) (Mycoplasmoides pneumoniae).